The chain runs to 160 residues: Cyclic pyranopterin monophosphate synthase (160 aa).

Residues 75–77 and 115–116 each bind substrate; these read MCH and ME. Residue Asp130 is part of the active site.

This sequence belongs to the MoaC family. Homohexamer; trimer of dimers.

It carries out the reaction (8S)-3',8-cyclo-7,8-dihydroguanosine 5'-triphosphate = cyclic pyranopterin phosphate + diphosphate. The protein operates within cofactor biosynthesis; molybdopterin biosynthesis. Functionally, catalyzes the conversion of (8S)-3',8-cyclo-7,8-dihydroguanosine 5'-triphosphate to cyclic pyranopterin monophosphate (cPMP). The polypeptide is Cyclic pyranopterin monophosphate synthase (Lysinibacillus sphaericus (strain C3-41)).